The sequence spans 426 residues: Dihydroorotase (426 aa).

Residues histidine 58 and histidine 60 each contribute to the Zn(2+) site. Residues 60-62 (HLR) and asparagine 92 contribute to the substrate site. The Zn(2+) site is built by aspartate 150, histidine 177, and histidine 230. A substrate-binding site is contributed by asparagine 276. Aspartate 303 serves as a coordination point for Zn(2+). Aspartate 303 is an active-site residue. Residues histidine 307 and 321–322 (FG) contribute to the substrate site.

Belongs to the metallo-dependent hydrolases superfamily. DHOase family. Class I DHOase subfamily. It depends on Zn(2+) as a cofactor.

It catalyses the reaction (S)-dihydroorotate + H2O = N-carbamoyl-L-aspartate + H(+). It functions in the pathway pyrimidine metabolism; UMP biosynthesis via de novo pathway; (S)-dihydroorotate from bicarbonate: step 3/3. Catalyzes the reversible cyclization of carbamoyl aspartate to dihydroorotate. This chain is Dihydroorotase, found in Listeria monocytogenes serotype 4a (strain HCC23).